The primary structure comprises 819 residues: MAHEGEQFIKDIQREYVDFLDDEEDQGIYAGHVKDMIAEKSKRLIVNVNDLKRKNPQRALGLLSNAADEQLAFGRALKEYASTVDPGYAKMHEDLFVGFEGCFGNRHVTPRSLTSIYLGNMVCVEGIVTKVSLIRPKVVRSVHYCPNTRKVMERKYTDLTSFEAVPSGAAYPTKDEDGNLLETEYGLSVYKDHQTLTIQEMPEKAPAGQLPRSVDIVCDDDLVDRCKPGDRVQIVGSYRCLPGKRGGYTSGTFRTVLLANNISLLSKESNLDISREDIMLCKKLAKNNDIFELLSKSLAPSIHGHAYVKQAILCLLLGGVEKILPNGTRLRGDINVLLIGDPSVAKSQLLRYVLNTAPRAIPTTGRGSSGVGLTAAVTTDQETGERRLEAGAMVLADRGVVCIDEFDKMSDIDRTAIHEVMEQGRVTISKAGIHASLNARCSVLAAANPVYGRYDQYKTPMENIGLQDSLLSRFDLLFVMLDVIDSDVDQMISDHVVRMHRYRNPKEADGEPLSMGSSYADSLSFVSSSEEKKDTEVYEKYDALLHGKSRQRHEKILSVEFMRKYIHIAKCMKPKLGEQACEAIANEYSRLRSQEAVETDVARTQPITARTLETLIRLSTAHARARMSKSVTIDDAHAAIELVQFAYFKKVLDKDRPSKRRRNSGSDAEDDNGEASSQRSPSRRSKRTRTATVGADSDEEDIEPPQPDAGDLTRRETRRSLPARSVAMLMASPSSEEQSVATSTTEPAIISDARLGEFKNNLQRLFREAREQSLALARITTAINVGSQEPFTAGEIEAAVHRMTEDNQIMVADDIVFLI.

In terms of domain architecture, MCM spans 290–496; sequence IFELLSKSLA…DVDQMISDHV (207 aa). The ADP site is built by Q348, L388, E389, A390, and A392. Residues 472 to 475 carry the Arginine finger motif; sequence SRFD. Phosphoserine is present on S522. Y538 bears the Phosphotyrosine mark. The interval 655 to 717 is disordered; the sequence is DRPSKRRRNS…DAGDLTRRET (63 aa). Phosphoserine is present on residues S664, S666, S680, and S682. 2 positions are modified to phosphothreonine: T690 and T692. Phosphoserine is present on residues S697, S735, and S739.

It belongs to the MCM family. In terms of assembly, component of the Mcm2-7 complex. The complex forms a toroidal hexameric ring with the proposed subunit order Mcm2-Mcm6-Mcm4-Mcm7-Mcm3-Mcm5.

It is found in the nucleus. It localises to the chromosome. The catalysed reaction is ATP + H2O = ADP + phosphate + H(+). Functionally, acts as a component of the Mcm2-7 complex (Mcm complex) (Mcm complex) which is the putative replicative helicase essential for 'once per cell cycle' DNA replication initiation and elongation in eukaryotic cells. Core component of CDC45-MCM-GINS (CMG) helicase, the molecular machine that unwinds template DNA during replication, and around which the replisome is built. The active ATPase sites in the Mcm2-7 ring are formed through the interaction surfaces of two neighboring subunits such that a critical structure of a conserved arginine finger motif is provided in trans relative to the ATP-binding site of the Walker A box of the adjacent subunit. The six ATPase active sites, however, are likely to contribute differentially to the complex helicase activity. The sequence is that of DNA replication licensing factor Mcm3 (Mcm3) from Drosophila melanogaster (Fruit fly).